Here is a 382-residue protein sequence, read N- to C-terminus: D-galactonate dehydratase (382 aa).

Asp183 provides a ligand contact to Mg(2+). His185 functions as the Proton donor in the catalytic mechanism. Mg(2+) is bound by residues Glu209 and Glu235. The active-site Proton acceptor is the His285.

This sequence belongs to the mandelate racemase/muconate lactonizing enzyme family. GalD subfamily. It depends on Mg(2+) as a cofactor.

It carries out the reaction D-galactonate = 2-dehydro-3-deoxy-D-galactonate + H2O. It participates in carbohydrate acid metabolism; D-galactonate degradation; D-glyceraldehyde 3-phosphate and pyruvate from D-galactonate: step 1/3. Functionally, catalyzes the dehydration of D-galactonate to 2-keto-3-deoxy-D-galactonate. The polypeptide is D-galactonate dehydratase (Salmonella paratyphi A (strain AKU_12601)).